The chain runs to 123 residues: Holo-[acyl-carrier-protein] synthase (123 aa).

2 residues coordinate Mg(2+): D8 and E56.

The protein belongs to the P-Pant transferase superfamily. AcpS family. It depends on Mg(2+) as a cofactor.

It is found in the cytoplasm. The catalysed reaction is apo-[ACP] + CoA = holo-[ACP] + adenosine 3',5'-bisphosphate + H(+). Transfers the 4'-phosphopantetheine moiety from coenzyme A to a Ser of acyl-carrier-protein. This is Holo-[acyl-carrier-protein] synthase from Clostridium botulinum (strain Eklund 17B / Type B).